An 84-amino-acid polypeptide reads, in one-letter code: Small ribosomal subunit protein bS16 (84 aa).

The protein belongs to the bacterial ribosomal protein bS16 family.

The chain is Small ribosomal subunit protein bS16 from Acaryochloris marina (strain MBIC 11017).